Here is a 591-residue protein sequence, read N- to C-terminus: Glutathione hydrolase (591 aa).

The signal sequence occupies residues 1-41 (MASKWIEEQPLVHRRDIRISSKSRIAAGLLVLLVLWRYGLP). Arg-122 serves as a coordination point for L-glutamate. N-linked (GlcNAc...) asparagine glycosylation is found at Asn-135, Asn-270, and Asn-389. Thr-393 (nucleophile) is an active-site residue. Residues Thr-411, Glu-432, and 464 to 465 (SA) contribute to the L-glutamate site. A glycan (N-linked (GlcNAc...) asparagine) is linked at Asn-534.

The protein belongs to the gamma-glutamyltransferase family.

It catalyses the reaction an N-terminal (5-L-glutamyl)-[peptide] + an alpha-amino acid = 5-L-glutamyl amino acid + an N-terminal L-alpha-aminoacyl-[peptide]. The enzyme catalyses glutathione + H2O = L-cysteinylglycine + L-glutamate. It carries out the reaction an S-substituted glutathione + H2O = an S-substituted L-cysteinylglycine + L-glutamate. Its pathway is mycotoxin biosynthesis. Gamma-glutamyltransferase; part of the gene cluster that mediates the biosynthesis of the secondary metabolite ustiloxin B, an antimitotic tetrapeptide. First, ustA is processed by the subtilisin-like endoprotease Kex2 that is outside the ustiloxin B gene cluster, at the C-terminal side of Arg-Lys, after transfer to Golgi apparatus through the endoplasmic reticulum (ER). Cleavage by KEX2 generates 16 peptides YAIG-I to YAIG-XVI. To process the precursor peptide further, at least two peptidases are necessary to cleave the N-terminal and C-terminal sides of the Tyr-Ala-Ile-Gly core peptide which serves as backbone for the synthesis of ustiloxin B, through cyclization and modification of the tyrosine with a non-protein coding amino acid, norvaline. One of the two peptidases must be the serine peptidase ustP; and the other pepdidase is probably ustH. Macrocyclization of the core peptide derived from ustA requires the tyrosinase ustQ, as well as the homologous oxidases ustYa and ustYb, and leads to the production of the first cyclization product N-desmethylustiloxin F. For the formation of N-desmethylustiloxin F, three oxidation steps are required, hydroxylation at the benzylic position, hydroxylation at either the aromatic ring of Tyr or beta-position of Ile, and oxidative cyclization. UstQ may catalyze the oxidation of a phenol moiety, whereas the ustYa and ustYb are most likely responsible for the remaining two-step oxidations. N-desmethylustiloxin F is then methylated by ustM to yield ustiloxin F which in turn substrate of the cytochrome P450 monooxygenase ustC which catalyzes the formation of S-deoxyustiloxin H. The flavoprotein monooxygenases ustF1 and ustF2 then participate in the modification of the side chain of S-deoxyustiloxin H, leading to the synthesis of an oxime intermediate, via ustiloxin H. Finally, carboxylative dehydration performed by the cysteine desulfurase-like protein ustD yields ustiloxin B. This Aspergillus flavus (strain ATCC 200026 / FGSC A1120 / IAM 13836 / NRRL 3357 / JCM 12722 / SRRC 167) protein is Glutathione hydrolase.